The sequence spans 153 residues: ATP synthase subunit b' (153 aa).

A helical membrane pass occupies residues 23–40; it reads LMAIQVVALTYILNSLFF.

Belongs to the ATPase B chain family. F-type ATPases have 2 components, F(1) - the catalytic core - and F(0) - the membrane proton channel. F(1) has five subunits: alpha(3), beta(3), gamma(1), delta(1), epsilon(1). F(0) has four main subunits: a(1), b(1), b'(1) and c(10-14). The alpha and beta chains form an alternating ring which encloses part of the gamma chain. F(1) is attached to F(0) by a central stalk formed by the gamma and epsilon chains, while a peripheral stalk is formed by the delta, b and b' chains.

It is found in the cellular thylakoid membrane. Its function is as follows. F(1)F(0) ATP synthase produces ATP from ADP in the presence of a proton or sodium gradient. F-type ATPases consist of two structural domains, F(1) containing the extramembraneous catalytic core and F(0) containing the membrane proton channel, linked together by a central stalk and a peripheral stalk. During catalysis, ATP synthesis in the catalytic domain of F(1) is coupled via a rotary mechanism of the central stalk subunits to proton translocation. Component of the F(0) channel, it forms part of the peripheral stalk, linking F(1) to F(0). The b'-subunit is a diverged and duplicated form of b found in plants and photosynthetic bacteria. This chain is ATP synthase subunit b', found in Prochlorococcus marinus (strain AS9601).